Reading from the N-terminus, the 833-residue chain is Patatin-like phospholipase domain-containing protein SNOG_00918 (833 aa).

Disordered stretches follow at residues Met1–Asp20 and His49–Asn71. The helical transmembrane segment at Trp108–Thr128 threads the bilayer. The 157-residue stretch at Leu301–Asn457 folds into the PNPLA domain. A GXSXG motif is present at residues Gly332–Gly336. Ser334 acts as the Nucleophile in catalysis. The active-site Proton acceptor is Asp444. Disordered regions lie at residues Thr630–Pro657 and Leu680–Leu833. Over residues Ser644 to Ser655 the composition is skewed to low complexity. Over residues Asp689–Lys707 the composition is skewed to polar residues. Composition is skewed to basic and acidic residues over residues Arg740–Ala750, Arg759–Arg769, and Asp782–Val794. Acidic residues predominate over residues Glu809–Glu819.

Belongs to the PLPL family.

The protein localises to the membrane. Probable lipid hydrolase. In Phaeosphaeria nodorum (strain SN15 / ATCC MYA-4574 / FGSC 10173) (Glume blotch fungus), this protein is Patatin-like phospholipase domain-containing protein SNOG_00918.